A 141-amino-acid chain; its full sequence is ATP synthase epsilon chain (141 aa).

Belongs to the ATPase epsilon chain family. F-type ATPases have 2 components, CF(1) - the catalytic core - and CF(0) - the membrane proton channel. CF(1) has five subunits: alpha(3), beta(3), gamma(1), delta(1), epsilon(1). CF(0) has three main subunits: a, b and c.

It localises to the cell inner membrane. Functionally, produces ATP from ADP in the presence of a proton gradient across the membrane. In Burkholderia ambifaria (strain ATCC BAA-244 / DSM 16087 / CCUG 44356 / LMG 19182 / AMMD) (Burkholderia cepacia (strain AMMD)), this protein is ATP synthase epsilon chain.